Reading from the N-terminus, the 246-residue chain is E3 ubiquitin ligase TRIM40 (246 aa).

Residues 12–55 form an RING-type zinc finger; sequence CPICLDPLKEAVSTDCRHLFCRMCLTQHMDKASVSGILSCPVCR. A B box-type zinc finger spans residues 64-105; it reads GDNYICHTHQKRVRRFCEASGHLLCEECLQSPEHQSHTELSI. Residues cysteine 69, histidine 72, cysteine 91, and histidine 97 each coordinate Zn(2+). A coiled-coil region spans residues 105-170; it reads IENAISHYKE…DQTKEQLKAL (66 aa).

Belongs to the TRIM/RBCC family. As to quaternary structure, interacts with NEDD8.

The catalysed reaction is S-ubiquitinyl-[E2 ubiquitin-conjugating enzyme]-L-cysteine + [acceptor protein]-L-lysine = [E2 ubiquitin-conjugating enzyme]-L-cysteine + N(6)-ubiquitinyl-[acceptor protein]-L-lysine.. E3 ubiquitin-protein ligase that plays a role in the limitation of the innate immune response. Mediates inhibition of the RLR signaling pathway by ubiquitinating RIGI and IFIH1 receptors, leading to their proteasomal degradation. Also promotes the neddylation of IKBKG/NEMO, stabilizing NFKBIA, and thereby inhibiting of NF-kappa-B nuclear translocation and activation. The polypeptide is E3 ubiquitin ligase TRIM40 (Trim40) (Mus musculus (Mouse)).